The primary structure comprises 660 residues: Alpha-1,2-mannosyltransferase MNN21 (660 aa).

Residues 1–17 (MFQQLTYRLRLFRRRHK) lie on the Cytoplasmic side of the membrane. The chain crosses the membrane as a helical span at residues 18-38 (YIFINSIFLSVIIIFLIYSYW). The Extracellular portion of the chain corresponds to 39-660 (SNLPAEDNSA…FLESTQNITD (622 aa)). The disordered stretch occupies residues 75–125 (PFEEKKPQVNPNNNQEVGVESGASEISQHKQQQQQQQHAKEPTTKTSSKSL). N-linked (GlcNAc...) asparagine glycosylation is present at Asn657.

Belongs to the MNN1/MNT family.

The protein resides in the golgi apparatus membrane. The protein operates within protein modification; protein glycosylation. In terms of biological role, alpha-1,2-mannosyltransferase required for cell wall integrity. Responsible for addition of the first alpha-1,2-linked mannose to form the branches on the mannan backbone of oligosaccharides. Addition of alpha-1,2-mannose is required for stabilization of the alpha-1,6-mannose backbone and hence regulates mannan fibril length; and is important for both immune recognition and virulence. The protein is Alpha-1,2-mannosyltransferase MNN21 (MNN21) of Candida albicans (strain SC5314 / ATCC MYA-2876) (Yeast).